Consider the following 963-residue polypeptide: Respiratory burst oxidase homolog protein A (963 aa).

A compositionally biased stretch (basic and acidic residues) spans 1 to 12; that stretch reads MRGLPGHERRWT. Residues 1–36 form a disordered region; sequence MRGLPGHERRWTSDTVSSGKDLSGESSPGTDSGNIS. Residues 1–399 are Cytoplasmic-facing; sequence MRGLPGHERR…VYSLQENWKR (399 aa). Polar residues predominate over residues 13–36; sequence SDTVSSGKDLSGESSPGTDSGNIS. EF-hand-like regions lie at residues 219–227 and 253–264; these read AKDGYLYRS and RRLKVDKISKEE. The region spanning 276–311 is the EF-hand domain; that stretch reads SFDSRLQIFFDMVDKNEDGRIGEEEVKEIIMLSASA. Residues D289, N291, D293, R295, and E300 each coordinate Ca(2+). The chain crosses the membrane as a helical span at residues 400-420; sequence IWVLVLWILIMIGLFLWKFYL. The Extracellular segment spans residues 421-435; the sequence is YKQKSAFQVMGYCLL. Residues 436 to 456 form a helical membrane-spanning segment; the sequence is TAKGAAETLKFNMALILLPVC. Positions 438–595 constitute a Ferric oxidoreductase domain; that stretch reads KGAAETLKFN…LLIIVYIVLI (158 aa). Residues 457-482 lie on the Cytoplasmic side of the membrane; sequence RNTITFLRSTKLSCFVPFDDNINFHK. Residues 483–503 form a helical membrane-spanning segment; that stretch reads TVAAAIVTGIILHAGNHLVCD. Topologically, residues 504-535 are extracellular; it reads FPKLIHANNTNYQKYLVNDFGPSQPQYIDLVK. Residues 536–556 form a helical membrane-spanning segment; that stretch reads GVEGVTGIIMVILMAIAFTLA. The Cytoplasmic portion of the chain corresponds to 557 to 583; that stretch reads TRWFRRSLIKFPKPFDRLTGFNAFWYS. The helical transmembrane segment at 584 to 604 threads the bilayer; it reads HHLLIIVYIVLIIHGTFLYLV. The Extracellular segment spans residues 605–759; sequence HNWYSKTTWM…APAQDYRKYD (155 aa). One can recognise an FAD-binding FR-type domain in the interval 634–754; it reads SGLYTVRLLK…DGPYGAPAQD (121 aa). The helical transmembrane segment at 760-780 threads the bilayer; sequence VLLLVGLGIGATPFISILKDL. Topologically, residues 781-963 are cytoplasmic; that stretch reads LKNIVTMEEQ…TKFEFHKEHF (183 aa).

It belongs to the RBOH (TC 5.B.1.3) family. Monomer and homodimer. In terms of processing, phosphorylated by CPK.

The protein localises to the cell membrane. Its function is as follows. Calcium-dependent NADPH oxidase that generates superoxide. Involved in the rapid and transient phase I oxidative burst induced by pathogen infection. In Solanum tuberosum (Potato), this protein is Respiratory burst oxidase homolog protein A (RBOHA).